Consider the following 670-residue polypeptide: uncharacterized protein (670 aa).

This is an uncharacterized protein from Ictalurid herpesvirus 1 (strain Auburn) (IcHV-1).